Here is a 971-residue protein sequence, read N- to C-terminus: Valine--tRNA ligase (971 aa).

Positions 55–65 (PNVTGSLHMGH) match the 'HIGH' region motif. Positions 572–576 (KMSKS) match the 'KMSKS' region motif. K575 serves as a coordination point for ATP. Positions 906–933 (KAELGRLQKDLDKVQKQHDQIASKLANE) form a coiled coil.

This sequence belongs to the class-I aminoacyl-tRNA synthetase family. ValS type 1 subfamily. Monomer.

The protein resides in the cytoplasm. It catalyses the reaction tRNA(Val) + L-valine + ATP = L-valyl-tRNA(Val) + AMP + diphosphate. Catalyzes the attachment of valine to tRNA(Val). As ValRS can inadvertently accommodate and process structurally similar amino acids such as threonine, to avoid such errors, it has a 'posttransfer' editing activity that hydrolyzes mischarged Thr-tRNA(Val) in a tRNA-dependent manner. This Acinetobacter baylyi (strain ATCC 33305 / BD413 / ADP1) protein is Valine--tRNA ligase.